The primary structure comprises 373 residues: MPSSMSGYIPSYLDKDELCVVCGDKATGYHYRCITCEGCKGFFRRTIQKNLHPSYSCKYEGKCVIDKVTRNQCQECRFKKCIAVGMATDLVLDDNKRLAKRKLIEENREKRRKDEIQKSLVQKPEPTQEEWELIQVVTEAHVATNAQGSHWKQKRKFLPEDIGQAPIVNAPEGGKVDLEAFSQFTKIITPAITRVVDFAKKLPMFCELPCEDQIILLKGCCMEIMSLRAAVRYDPESETLTLNGEMAVTRGQLKNGGLGVVSDAIFDLGVSLSSFSLDDTEVALLQAVLLMSSDRPGLASVERIEKCQEGFLLAFEHYINYRKHNIAHFWPKLLMKVTDLRMIGACHASRFLHMKVECPTELFPPLFLEVFED.

A modulating region spans residues 1-18 (MPSSMSGYIPSYLDKDEL). NR C4-type zinc fingers lie at residues 19–39 (CVVC…CEGC) and 57–81 (CKYE…FKKC). The segment at residues 19 to 93 (CVVCGDKATG…VGMATDLVLD (75 aa)) is a DNA-binding region (nuclear receptor). Residues 129–373 (EEWELIQVVT…PPLFLEVFED (245 aa)) enclose the NR LBD domain.

Belongs to the nuclear hormone receptor family. NR1 subfamily.

It is found in the nucleus. In terms of biological role, high affinity receptor for triiodothyronine (T3). The protein is Thyroid hormone receptor beta-A (thrb-a) of Xenopus laevis (African clawed frog).